The following is a 109-amino-acid chain: Small ribosomal subunit protein bS6 (109 aa).

It belongs to the bacterial ribosomal protein bS6 family.

Functionally, binds together with bS18 to 16S ribosomal RNA. The sequence is that of Small ribosomal subunit protein bS6 from Ehrlichia canis (strain Jake).